The following is a 30-amino-acid chain: 80 kDa carcinoembryonic antigen-binding protein (30 aa).

Binds to carcinoembryonic antigen (CEA). In terms of processing, the N-terminus is blocked.

It is found in the cell membrane. In terms of biological role, may play a role in the development of hepatic metastases from colorectal cancers. The chain is 80 kDa carcinoembryonic antigen-binding protein from Rattus norvegicus (Rat).